The chain runs to 159 residues: Trafficking protein particle complex subunit 6A (159 aa).

Ser-33 is modified (phosphoserine).

It belongs to the TRAPP small subunits family. BET3 subfamily. In terms of assembly, part of the multisubunit transport protein particle (TRAPP) complex. Heterodimer with TRAPPC3. The heterodimer TRAPPC3-TRAPPC6A interacts with TRAPPC2L. Interacts with TRAPPC2L. As to expression, ubiquitous, with lowest expression in skeletal muscle and brain and highest in kidney, liver and testis, as well as in cultured melanocytes.

It localises to the golgi apparatus. The protein localises to the cis-Golgi network. Its subcellular location is the endoplasmic reticulum. In terms of biological role, may play a role in vesicular transport during the biogenesis of melanosomes. The protein is Trafficking protein particle complex subunit 6A of Mus musculus (Mouse).